Reading from the N-terminus, the 283-residue chain is tRNA pseudouridine synthase A (283 aa).

D52 (nucleophile) is an active-site residue. Y148 provides a ligand contact to substrate.

Belongs to the tRNA pseudouridine synthase TruA family. Homodimer.

It carries out the reaction uridine(38/39/40) in tRNA = pseudouridine(38/39/40) in tRNA. In terms of biological role, formation of pseudouridine at positions 38, 39 and 40 in the anticodon stem and loop of transfer RNAs. The protein is tRNA pseudouridine synthase A of Orientia tsutsugamushi (strain Ikeda) (Rickettsia tsutsugamushi).